The chain runs to 176 residues: Large ribosomal subunit protein uL30 (176 aa).

This sequence belongs to the universal ribosomal protein uL30 family. As to quaternary structure, part of the 50S ribosomal subunit.

This is Large ribosomal subunit protein uL30 from Pyrobaculum arsenaticum (strain DSM 13514 / JCM 11321 / PZ6).